The following is a 347-amino-acid chain: MTRNSLLNPEAENADPDQALRPRSLDEFIGQQAARENIRVFIEAAKKRQESLDHVLFFGPPGLGKTTLAQIIAREMGVGFRATSGPVIVKSGDLAALLTNLEDGDVLFIDEIHRLQPVVEEVLYPAMEDRALDLMIGEGPSARSVRIDLPHFTLVGATTRQGLLSTPLRDRFGIPVRLQFYSIEELRQVITRAARLLGMEIAPEGAEEIAKRSRGTPRIAGRLLRRVRDFADVAGSKIVDRFIADEALNRLEVDKLGLDLMDRRYLMMIADIYKGGPVGLDTLAAGLSEPRDTVEEVIEPYLIQLGLVARTARGRQLNGLAWRHLGLTDPREAEGKHSEIKNQPGLL.

The large ATPase domain (RuvB-L) stretch occupies residues 1 to 181; that stretch reads MTRNSLLNPE…FGIPVRLQFY (181 aa). Leucine 20, arginine 21, glycine 62, lysine 65, threonine 66, threonine 67, arginine 171, tyrosine 181, and arginine 218 together coordinate ATP. Threonine 66 is a Mg(2+) binding site. Residues 182–252 form a small ATPAse domain (RuvB-S) region; the sequence is SIEELRQVIT…IADEALNRLE (71 aa). The head domain (RuvB-H) stretch occupies residues 255–347; that stretch reads KLGLDLMDRR…SEIKNQPGLL (93 aa). Residues arginine 291, arginine 310, and arginine 315 each coordinate DNA.

This sequence belongs to the RuvB family. As to quaternary structure, homohexamer. Forms an RuvA(8)-RuvB(12)-Holliday junction (HJ) complex. HJ DNA is sandwiched between 2 RuvA tetramers; dsDNA enters through RuvA and exits via RuvB. An RuvB hexamer assembles on each DNA strand where it exits the tetramer. Each RuvB hexamer is contacted by two RuvA subunits (via domain III) on 2 adjacent RuvB subunits; this complex drives branch migration. In the full resolvosome a probable DNA-RuvA(4)-RuvB(12)-RuvC(2) complex forms which resolves the HJ.

The protein localises to the cytoplasm. The enzyme catalyses ATP + H2O = ADP + phosphate + H(+). The RuvA-RuvB-RuvC complex processes Holliday junction (HJ) DNA during genetic recombination and DNA repair, while the RuvA-RuvB complex plays an important role in the rescue of blocked DNA replication forks via replication fork reversal (RFR). RuvA specifically binds to HJ cruciform DNA, conferring on it an open structure. The RuvB hexamer acts as an ATP-dependent pump, pulling dsDNA into and through the RuvAB complex. RuvB forms 2 homohexamers on either side of HJ DNA bound by 1 or 2 RuvA tetramers; 4 subunits per hexamer contact DNA at a time. Coordinated motions by a converter formed by DNA-disengaged RuvB subunits stimulates ATP hydrolysis and nucleotide exchange. Immobilization of the converter enables RuvB to convert the ATP-contained energy into a lever motion, pulling 2 nucleotides of DNA out of the RuvA tetramer per ATP hydrolyzed, thus driving DNA branch migration. The RuvB motors rotate together with the DNA substrate, which together with the progressing nucleotide cycle form the mechanistic basis for DNA recombination by continuous HJ branch migration. Branch migration allows RuvC to scan DNA until it finds its consensus sequence, where it cleaves and resolves cruciform DNA. The chain is Holliday junction branch migration complex subunit RuvB from Zymomonas mobilis subsp. mobilis (strain ATCC 31821 / ZM4 / CP4).